The chain runs to 211 residues: Arginine exporter protein ArgO (211 aa).

The next 6 membrane-spanning stretches (helical) occupy residues 1–21 (MISY…PLGP), 37–57 (LMIA…GIFG), 68–88 (LLAL…FGAL), 111–131 (IIAT…DTFV), 147–167 (WFAL…ALLA), and 179–199 (AQRI…FQLA).

This sequence belongs to the LysE/ArgO transporter (TC 2.A.75) family.

Its subcellular location is the cell inner membrane. The enzyme catalyses L-arginine(in) = L-arginine(out). Functionally, involved in the export of arginine. Important to control the intracellular level of arginine and the correct balance between arginine and lysine. The protein is Arginine exporter protein ArgO of Salmonella paratyphi A (strain ATCC 9150 / SARB42).